The following is a 153-amino-acid chain: Transcriptional repressor NrdR (153 aa).

The segment at 3–34 (CPFCNHLHDKVVDSRESKEGDAIRRRRECLEC) is a zinc-finger region. Residues 49–139 (YMVVKKDGRR…VYRDFQDEQA (91 aa)) form the ATP-cone domain.

Belongs to the NrdR family. The cofactor is Zn(2+).

Functionally, negatively regulates transcription of bacterial ribonucleotide reductase nrd genes and operons by binding to NrdR-boxes. The protein is Transcriptional repressor NrdR of Solibacter usitatus (strain Ellin6076).